Consider the following 561-residue polypeptide: MSSHGNSLFLRESGAGGGCLQGLQDSLQQRALRTRLRLQTMTREHVRRFLRRNAFILLTVSAVIIGVSLAFALRPYQLTYRQIKYFSFPGELLMRMLQMLVLPLIVSSRVTGMASLDNKATGRMGMRAAVYYMVTTVIAVFIGILMVTIIHPGKGSKEGLHREGRIETVPTADAFMDLVRNMFPPNLVEACFKQFKTQYSTRVVTRTIVRTDNGSELGASISPPSSAENETSILENVTRALGTLQEVISFEETVPVPGSANGINALGLVVFSVAFGLVIGGMKHKGRVLRDFFDSLNEAIMRLVGIIIWYAPVGILFLIAGKILEMEDMAVLGGQLGMYTLTVIVGLFLHAGGVLPLIYFLVTHRNPFPFIGGILQALITAMGTSSSSATLPITFRCLEEGLGVDRRITRFVLPVGATVNMDGTALYEALAAIFIAQVNNYELNLGQITTISITATAASVGAAGIPQAGLVTMVIVLTSVGLPTEDITLIIAVDWFLDRLRTMTNVLGDSIGAAVIEHLSQRELELQEAELTLPSLGKPYKSLMAQAKGASRGRGGNESVM.

At 1 to 52 (MSSHGNSLFLRESGAGGGCLQGLQDSLQQRALRTRLRLQTMTREHVRRFLRR) the chain is on the cytoplasmic side. At S2 the chain carries Phosphoserine. 3 consecutive transmembrane segments (helical) span residues 53 to 73 (NAFI…AFAL), 96 to 116 (MLQM…MASL), and 130 to 150 (VYYM…VTII). Residues N213, N229, and N236 are each glycosylated (N-linked (GlcNAc...) asparagine). Transmembrane regions (helical) follow at residues 259-282 (SANG…IGGM), 292-319 (FFDS…LFLI), and 341-362 (LTVI…YFLV). Positions 368 to 398 (FPFIGGILQALITAMGTSSSSATLPITFRCL) form an intramembrane region, discontinuously helical. 385-387 (SSS) is a binding site for L-aspartate. The helical transmembrane segment at 408–434 (ITRFVLPVGATVNMDGTALYEALAAIF) threads the bilayer. Na(+) is bound by residues G416, T418, and N420. Residues T424, 465-469 (IPQAG), D498, and N505 contribute to the L-aspartate site. Residues 448–481 (ITTISITATAASVGAAGIPQAGLVTMVIVLTSVG) constitute an intramembrane region (discontinuously helical). Residues 495–516 (WFLDRLRTMTNVLGDSIGAAVI) traverse the membrane as a helical segment. Positions 505 and 509 each coordinate Na(+).

This sequence belongs to the dicarboxylate/amino acid:cation symporter (DAACS) (TC 2.A.23) family. SLC1A6 subfamily. As to quaternary structure, homotrimer.

The protein localises to the cell membrane. It carries out the reaction K(+)(in) + L-glutamate(out) + 3 Na(+)(out) + H(+)(out) = K(+)(out) + L-glutamate(in) + 3 Na(+)(in) + H(+)(in). The enzyme catalyses K(+)(in) + L-aspartate(out) + 3 Na(+)(out) + H(+)(out) = K(+)(out) + L-aspartate(in) + 3 Na(+)(in) + H(+)(in). The catalysed reaction is D-aspartate(out) + K(+)(in) + 3 Na(+)(out) + H(+)(out) = D-aspartate(in) + K(+)(out) + 3 Na(+)(in) + H(+)(in). In terms of biological role, sodium-dependent, high-affinity amino acid transporter that mediates the uptake of L-glutamate and also L-aspartate and D-aspartate. Functions as a symporter that transports one amino acid molecule together with two or three Na(+) ions and one proton, in parallel with the counter-transport of one K(+) ion. Mediates Cl(-) flux that is not coupled to amino acid transport; this avoids the accumulation of negative charges due to aspartate and Na(+) symport. Plays a redundant role in the rapid removal of released glutamate from the synaptic cleft, which is essential for terminating the postsynaptic action of glutamate. The protein is Excitatory amino acid transporter 4 (Slc1a6) of Rattus norvegicus (Rat).